A 398-amino-acid polypeptide reads, in one-letter code: MDTQAFKRSLHHSERYNRRGFGRANEVASNLEKAYQSSLIGSIRDNGYVLQHGRLQVKLAEAFGFCWGVERAVAMAYETRRHYPSERIWITNEIIHNPSVNEHLREMDVLFIHAEGGVKDFSCVNDGDVVILPAFGATVQEMELLHERGCHIIDTTCPWVSKVWHTVEKHKKQEFTSIIHGKVKHEETLATSSFAGTYLVVLDLDEAQLVADYILGQGDRAAFMKRFAKACSANFDPDQDLQRLGVANQTTMLKSETEEIGRLFERTMLRKYGPIELNKHFLSFNTICDATEERQQAMFSLVDEPLDLLVVIGGFNSSNTTHLQEIAISRGIRSFHIDTPERIGDNNSIQHKPLGEDLFIESNFLPAGSVSVGITSGASTPDRVVEHVIQKLIDLTSG.

Cys-66 contacts [4Fe-4S] cluster. His-96 provides a ligand contact to (2E)-4-hydroxy-3-methylbut-2-enyl diphosphate. His-96 is a dimethylallyl diphosphate binding site. His-96 lines the isopentenyl diphosphate pocket. Cys-157 contacts [4Fe-4S] cluster. His-185 lines the (2E)-4-hydroxy-3-methylbut-2-enyl diphosphate pocket. His-185 contacts dimethylallyl diphosphate. His-185 provides a ligand contact to isopentenyl diphosphate. The active-site Proton donor is the Glu-187. Thr-250 serves as a coordination point for (2E)-4-hydroxy-3-methylbut-2-enyl diphosphate. Cys-288 contacts [4Fe-4S] cluster. Positions 317, 318, 319, and 379 each coordinate (2E)-4-hydroxy-3-methylbut-2-enyl diphosphate. Residues Ser-317, Ser-318, Asn-319, and Ser-379 each coordinate dimethylallyl diphosphate. Ser-317, Ser-318, Asn-319, and Ser-379 together coordinate isopentenyl diphosphate.

The protein belongs to the IspH family. It depends on [4Fe-4S] cluster as a cofactor.

It carries out the reaction isopentenyl diphosphate + 2 oxidized [2Fe-2S]-[ferredoxin] + H2O = (2E)-4-hydroxy-3-methylbut-2-enyl diphosphate + 2 reduced [2Fe-2S]-[ferredoxin] + 2 H(+). The catalysed reaction is dimethylallyl diphosphate + 2 oxidized [2Fe-2S]-[ferredoxin] + H2O = (2E)-4-hydroxy-3-methylbut-2-enyl diphosphate + 2 reduced [2Fe-2S]-[ferredoxin] + 2 H(+). The protein operates within isoprenoid biosynthesis; dimethylallyl diphosphate biosynthesis; dimethylallyl diphosphate from (2E)-4-hydroxy-3-methylbutenyl diphosphate: step 1/1. It functions in the pathway isoprenoid biosynthesis; isopentenyl diphosphate biosynthesis via DXP pathway; isopentenyl diphosphate from 1-deoxy-D-xylulose 5-phosphate: step 6/6. Catalyzes the conversion of 1-hydroxy-2-methyl-2-(E)-butenyl 4-diphosphate (HMBPP) into a mixture of isopentenyl diphosphate (IPP) and dimethylallyl diphosphate (DMAPP). Acts in the terminal step of the DOXP/MEP pathway for isoprenoid precursor biosynthesis. In Prochlorococcus marinus (strain MIT 9313), this protein is 4-hydroxy-3-methylbut-2-enyl diphosphate reductase.